We begin with the raw amino-acid sequence, 459 residues long: 1,3-beta-glucanosyltransferase gas2 (459 aa).

The signal sequence occupies residues M1–A19. N-linked (GlcNAc...) asparagine glycosylation is found at N34 and N68. A disulfide bond links C69 and C98. Y87 is a (1,3-beta-D-glucosyl)n binding site. N90, N104, and N146 each carry an N-linked (GlcNAc...) asparagine glycan. The (1,3-beta-D-glucosyl)n site is built by N155 and E156. E156 acts as the Proton donor in catalysis. N160 carries N-linked (GlcNAc...) asparagine glycosylation. 2 residues coordinate (1,3-beta-D-glucosyl)n: D197 and R202. Intrachain disulfides connect C211–C350 and C235–C266. 3 N-linked (GlcNAc...) asparagine glycosylation sites follow: N212, N218, and N254. E263 functions as the Nucleophile in the catalytic mechanism. N284 carries N-linked (GlcNAc...) asparagine glycosylation. Position 295 (Y295) interacts with (1,3-beta-D-glucosyl)n. N308, N334, N344, N354, and N370 each carry an N-linked (GlcNAc...) asparagine glycan. 3 disulfide bridges follow: C374/C427, C383/C449, and C402/C409. N423 is a glycosylation site (N-linked (GlcNAc...) asparagine).

The protein belongs to the glycosyl hydrolase 72 family.

It localises to the endoplasmic reticulum lumen. The protein resides in the secreted. Functionally, splits internally a 1,3-beta-glucan molecule and transfers the newly generated reducing end (the donor) to the non-reducing end of another 1,3-beta-glucan molecule (the acceptor) forming a 1,3-beta linkage, resulting in the elongation of 1,3-beta-glucan chains in the cell wall. The polypeptide is 1,3-beta-glucanosyltransferase gas2 (gas2) (Schizosaccharomyces pombe (strain 972 / ATCC 24843) (Fission yeast)).